A 124-amino-acid chain; its full sequence is Aspartate 1-decarboxylase (124 aa).

The Schiff-base intermediate with substrate; via pyruvic acid role is filled by S25. S25 is modified (pyruvic acid (Ser)). Residue T57 coordinates substrate. The active-site Proton donor is the Y58. Residue 71-73 (GAA) coordinates substrate.

This sequence belongs to the PanD family. As to quaternary structure, heterooctamer of four alpha and four beta subunits. Pyruvate serves as cofactor. Post-translationally, is synthesized initially as an inactive proenzyme, which is activated by self-cleavage at a specific serine bond to produce a beta-subunit with a hydroxyl group at its C-terminus and an alpha-subunit with a pyruvoyl group at its N-terminus.

The protein localises to the cytoplasm. The catalysed reaction is L-aspartate + H(+) = beta-alanine + CO2. It participates in cofactor biosynthesis; (R)-pantothenate biosynthesis; beta-alanine from L-aspartate: step 1/1. In terms of biological role, catalyzes the pyruvoyl-dependent decarboxylation of aspartate to produce beta-alanine. The chain is Aspartate 1-decarboxylase from Bdellovibrio bacteriovorus (strain ATCC 15356 / DSM 50701 / NCIMB 9529 / HD100).